We begin with the raw amino-acid sequence, 359 residues long: Cyclin-Y-like protein 1 (359 aa).

Serine 67, serine 105, and serine 112 each carry phosphoserine. A Cyclin N-terminal domain is found at 145–267 (VTLAIYYHIK…CQILKDITVE (123 aa)). Serine 344 carries the phosphoserine modification.

This sequence belongs to the cyclin family. Cyclin Y subfamily. As to quaternary structure, interacts with CDK16; this interaction mutually increases the stability of CDK16 and CCNYL1 and increases the kinase activity of CDK16.

It is found in the cell membrane. Functionally, key regulator of Wnt signaling implicated in various biological processes including male fertility, embryonic neurogenesis and cortex development. Activates the cyclin-dependent kinase CDK16, and promotes sperm maturation. The polypeptide is Cyclin-Y-like protein 1 (Homo sapiens (Human)).